Here is a 278-residue protein sequence, read N- to C-terminus: Urease accessory protein UreD (278 aa).

Belongs to the UreD family. UreD, UreF and UreG form a complex that acts as a GTP-hydrolysis-dependent molecular chaperone, activating the urease apoprotein by helping to assemble the nickel containing metallocenter of UreC. The UreE protein probably delivers the nickel.

Its subcellular location is the cytoplasm. Its function is as follows. Required for maturation of urease via the functional incorporation of the urease nickel metallocenter. The chain is Urease accessory protein UreD from Deinococcus radiodurans (strain ATCC 13939 / DSM 20539 / JCM 16871 / CCUG 27074 / LMG 4051 / NBRC 15346 / NCIMB 9279 / VKM B-1422 / R1).